A 534-amino-acid chain; its full sequence is Glucans biosynthesis protein D (534 aa).

The segment at residues 1–30 (MRMQRRHLLKNAAAALAALGLPALPQWALA) is a signal peptide (tat-type signal).

This sequence belongs to the OpgD/OpgG family. Predicted to be exported by the Tat system. The position of the signal peptide cleavage has not been experimentally proven.

Its subcellular location is the periplasm. The protein operates within glycan metabolism; osmoregulated periplasmic glucan (OPG) biosynthesis. Its function is as follows. Probably involved in the control of the structural glucose backbone of osmoregulated periplasmic glucans (OPGs). The polypeptide is Glucans biosynthesis protein D (Xanthomonas oryzae pv. oryzae (strain KACC10331 / KXO85)).